The sequence spans 335 residues: MKDIFEKLAAQENLTEAEITAVAEKIFKGELSEAQIAAFLMALKIKGETPEEILGLVKTIKKNAAVIPSQTSDAMDNCGTGGDKSFSFNISTTCSFVLAAGGIHIAKHGNRSISSKSGSADVLEELGINVVLAPEKLAQVLDETGIVFLFAQKMHPAMRYISPARQALGIPTVMNLIGPLTHPMDLETQLLGLYQADLQDDLAQVLKLLGRKRAVIITGPDNMDEAALYGKNHYTLLDNGQISQGSFTFEDFDMPKVTLEDIKGGDAKENAQILVSVLKNEPSPYLETTLLNAGLGFYANGKVDSIKEGIDLAREVIASGKAYAKLKALQEAQVD.

5-phospho-alpha-D-ribose 1-diphosphate-binding positions include G79, 82-83 (GD), S87, 89-92 (NIST), 107-115 (KHGNRSISS), and S119. G79 lines the anthranilate pocket. S91 contacts Mg(2+). N110 is a binding site for anthranilate. An anthranilate-binding site is contributed by R165. Residues D224 and E225 each contribute to the Mg(2+) site.

This sequence belongs to the anthranilate phosphoribosyltransferase family. Homodimer. Mg(2+) is required as a cofactor.

It catalyses the reaction N-(5-phospho-beta-D-ribosyl)anthranilate + diphosphate = 5-phospho-alpha-D-ribose 1-diphosphate + anthranilate. The protein operates within amino-acid biosynthesis; L-tryptophan biosynthesis; L-tryptophan from chorismate: step 2/5. Catalyzes the transfer of the phosphoribosyl group of 5-phosphorylribose-1-pyrophosphate (PRPP) to anthranilate to yield N-(5'-phosphoribosyl)-anthranilate (PRA). The chain is Anthranilate phosphoribosyltransferase from Streptococcus mutans serotype c (strain ATCC 700610 / UA159).